A 267-amino-acid chain; its full sequence is Cysteine protease avirulence protein AvrPphB (267 aa).

Residue Gly-63 is the site of N-myristoyl glycine; by host attachment. Catalysis depends on residues Cys-98, His-212, and Asp-227.

Belongs to the peptidase C58 family. In terms of assembly, in infected plant cells, the 28 kDa product interacts with PBS1. Post-translationally, autocleaved. This function is essential for myristoylation in infected plant cell and for eliciting the plant hypersensitive response. Myristoylation of 28 kDa product in infected plant cells; it mediates the localization to membranes.

It is found in the secreted. The protein resides in the host membrane. Its function is as follows. Cysteine protease avirulence protein, which is essential during infection of plant cells from cultivar-specific of beans and Arabidopsis thaliana. The autocleavage of the protein is required for virulence function. May act by affecting the plant defense system. In plants lacking R3 or RPS5 resistance genes, it probably impairs the plant defense system and leads to the bacteria multiplication. In contrast, in plants containing the R3 or RPS5 protein, it is unable to induce disease symptoms, explaining its avirulence name. The 7 kDa product is required for the type-III translocation from Pseudomonas strains to the plant, but are partially dispensable for effector recognition following in planta expression. In infected plants, it acts by cleaving the PBS1 protein, which leads to resistance or disease, depending on the presence or absence of RPS5, respectively. Targets the Arabidopsis kinases PBS1, BIK1, PBL1, PBL2, PBL3, PBL5, PBL7, PBL9 and PBL11 for cleavage in vitro. Can block recognition of AvrB avirulence factor by plant cells by cleaving Arabidopsis RIPK kinase and suppressing Arabidopsis RPM1 activation. Cannot block AvrRpm1-induced activation of RPM1. The chain is Cysteine protease avirulence protein AvrPphB (avrPph3) from Pseudomonas savastanoi pv. phaseolicola (Pseudomonas syringae pv. phaseolicola).